A 929-amino-acid polypeptide reads, in one-letter code: Band 3 anion transport protein (929 aa).

Met-1 bears the N-acetylmethionine mark. Residues 1-422 are Cytoplasmic-facing; that stretch reads MGDMRDHEEV…LSDITDALSP (422 aa). A Phosphoserine modification is found at Ser-18. Residues Tyr-31 and Tyr-56 each carry the phosphotyrosine modification. Residues 46–67 form a disordered region; sequence ALPTEQTATDYVPSSTSTPHPS. Residues 58 to 67 show a composition bias toward low complexity; sequence PSSTSTPHPS. The tract at residues 69 to 303 is globular; that stretch reads GQVYVELQEL…LGRAAATLMT (235 aa). The tract at residues 190–199 is interaction with ANK1; it reads AVLTRSGGAS. Ser-199, Ser-222, and Ser-363 each carry phosphoserine. The dimerization arm stretch occupies residues 317–370; sequence REELLRSLESFLDCSLVLPPTDAPSEKALLNLVPVQKELLRRRYLPSPAKPDPN. The tract at residues 366–389 is disordered; it reads KPDPNLYNTLDLNGGKGGPGDEDD. Residue Tyr-372 is modified to Phosphotyrosine. Thr-374 carries the post-translational modification Phosphothreonine. Residues 423–446 traverse the membrane as a helical segment; sequence QVLAAVIFIYFAALSPAVTFGGLL. At 447–454 the chain is on the extracellular side; sequence GEKTRNLM. The helical transmembrane segment at 455–475 threads the bilayer; that stretch reads GVSELLISTAVQGILFALLGA. At 476-478 the chain is on the cytoplasmic side; sequence QPL. Residues 479-495 traverse the membrane as a discontinuously helical segment; the sequence is LVLGFSGPLLVFEEAFF. Residues 496–504 are Extracellular-facing; it reads SFCESNNLE. A helical membrane pass occupies residues 505–525; that stretch reads YIVGRAWIGFWLILLVMLVVA. Topologically, residues 526–537 are cytoplasmic; that stretch reads FEGSFLVQYISR. A helical transmembrane segment spans residues 538-560; the sequence is YTQEIFSFLISLIFIYETFSKLI. Residues 561 to 588 lie on the Extracellular side of the membrane; the sequence is KIFQDYPLQQTYAPVVMKPKPQGPVPNT. The chain crosses the membrane as a helical span at residues 589-609; that stretch reads ALFSLVLMAGTFLLAMTLRKF. The Cytoplasmic portion of the chain corresponds to 610–620; it reads KNSTYFPGKLR. The helical transmembrane segment at 621–641 threads the bilayer; it reads RVIGDFGVPISILIMVLVDSF. At 642 to 681 the chain is on the extracellular side; the sequence is IKGTYTQKLSVPDGLKVSNSSARGWVIHPLGLYRLFPTWM. N-linked (GlcNAc...) asparagine glycosylation occurs at Asn-660. A helical transmembrane segment spans residues 682 to 702; that stretch reads MFASVLPALLVFILIFLESQI. Residues 703 to 718 are Cytoplasmic-facing; that stretch reads TTLIVSKPERKMIKGS. A helical transmembrane segment spans residues 719-737; it reads GFHLDLLLVVGMGGVAALF. Residues 738 to 755 traverse the membrane as a discontinuously helical segment; the sequence is GMPWLSATTVRSVTHANA. Topologically, residues 756 to 778 are cytoplasmic; that stretch reads LTVMGKASGPGAAAQIQEVKEQR. 2 consecutive transmembrane segments (helical) span residues 779–799 and 800–818; these read ISGL…PILS and RIPL…VTSL. Residues 819-856 are Cytoplasmic-facing; the sequence is SGIQLFDRILLLFKPPKYHPDVPFVKRVKTWRMHLFTG. The segment at residues 857–887 is an intramembrane region (discontinuously helical); sequence IQIICLAVLWVVKSTPASLALPFVLILTVPL. Cys-861 carries the S-palmitoyl cysteine lipid modification. Residues 888–929 are Cytoplasmic-facing; it reads RRLILPLIFRELELQCLDGDDAKVTFDEENGLDEYDEVPMPV. Tyr-922 bears the Phosphotyrosine mark.

It belongs to the anion exchanger (TC 2.A.31) family. In terms of assembly, a dimer in solution, but in its membrane environment, it exists primarily as a mixture of dimers and tetramers and spans the membrane asymmetrically. Component of the ankyrin-1 complex in the erythrocyte, composed of ANK1, RHCE, RHAG, SLC4A1, EPB42, GYPA, GYPB and AQP1. Interacts with STOM; this interaction positively regulates SLC4A1 activity. Interacts with GYPA; a GYPA monomer is bound at each end of the SLC4A1 dimer forming a heterotetramer. Three SLC4A1 dimers (Band 3-I, Band 3-II and Band 3-III) participates in the ankyrin-1 complex. Interacts (via the cytoplasmic domain) with EPB42; this interaction is mediated by the SLC4A1 Band 3-I dimer. Interacts (via the cytoplasmic domain) directly with ANK1; this interaction is mediated by the SLC4A1 Band 3-II and Band 3-III dimers. Interacts with TMEM139. Detected in erythrocytes (at protein level).

It is found in the cell membrane. Its subcellular location is the basolateral cell membrane. It catalyses the reaction hydrogencarbonate(in) + chloride(out) = hydrogencarbonate(out) + chloride(in). Functions both as a transporter that mediates electroneutral anion exchange across the cell membrane and as a structural protein. Component of the ankyrin-1 complex of the erythrocyte membrane; required for normal flexibility and stability of the erythrocyte membrane and for normal erythrocyte shape via the interactions of its cytoplasmic domain with cytoskeletal proteins, glycolytic enzymes, and hemoglobin. Functions as a transporter that mediates the 1:1 exchange of inorganic anions across the erythrocyte membrane. Mediates chloride-bicarbonate exchange in the kidney, and is required for normal acidification of the urine. The polypeptide is Band 3 anion transport protein (Mus musculus (Mouse)).